Consider the following 355-residue polypeptide: UDP-N-acetylglucosamine--N-acetylmuramyl-(pentapeptide) pyrophosphoryl-undecaprenol N-acetylglucosamine transferase (355 aa).

Residues Arg-166, Ser-196, and Gln-290 each coordinate UDP-N-acetyl-alpha-D-glucosamine.

Belongs to the glycosyltransferase 28 family. MurG subfamily.

Its subcellular location is the cell membrane. The catalysed reaction is Mur2Ac(oyl-L-Ala-gamma-D-Glu-L-Lys-D-Ala-D-Ala)-di-trans,octa-cis-undecaprenyl diphosphate + UDP-N-acetyl-alpha-D-glucosamine = beta-D-GlcNAc-(1-&gt;4)-Mur2Ac(oyl-L-Ala-gamma-D-Glu-L-Lys-D-Ala-D-Ala)-di-trans,octa-cis-undecaprenyl diphosphate + UDP + H(+). It participates in cell wall biogenesis; peptidoglycan biosynthesis. Cell wall formation. Catalyzes the transfer of a GlcNAc subunit on undecaprenyl-pyrophosphoryl-MurNAc-pentapeptide (lipid intermediate I) to form undecaprenyl-pyrophosphoryl-MurNAc-(pentapeptide)GlcNAc (lipid intermediate II). The polypeptide is UDP-N-acetylglucosamine--N-acetylmuramyl-(pentapeptide) pyrophosphoryl-undecaprenol N-acetylglucosamine transferase (Staphylococcus haemolyticus (strain JCSC1435)).